Here is a 141-residue protein sequence, read N- to C-terminus: Auxin-responsive protein SAUR64 (141 aa).

It belongs to the ARG7 family.

It is found in the cell membrane. Functionally, may promote auxin-stimulated organ elongation, such as hypocotyls, stamen filaments and petals. The chain is Auxin-responsive protein SAUR64 from Arabidopsis thaliana (Mouse-ear cress).